The following is a 301-amino-acid chain: Recombination-associated protein RdgC (301 aa).

The protein belongs to the RdgC family.

It is found in the cytoplasm. The protein resides in the nucleoid. May be involved in recombination. In Pseudoalteromonas atlantica (strain T6c / ATCC BAA-1087), this protein is Recombination-associated protein RdgC.